The chain runs to 148 residues: Lysozyme C (148 aa).

Residues methionine 1–glycine 18 form the signal peptide. In terms of domain architecture, C-type lysozyme spans lysine 19–valine 148. Cystine bridges form between cysteine 24–cysteine 146, cysteine 48–cysteine 134, cysteine 83–cysteine 99, and cysteine 95–cysteine 113. Catalysis depends on residues glutamate 53 and aspartate 71.

This sequence belongs to the glycosyl hydrolase 22 family. As to quaternary structure, monomer.

Its subcellular location is the secreted. It carries out the reaction Hydrolysis of (1-&gt;4)-beta-linkages between N-acetylmuramic acid and N-acetyl-D-glucosamine residues in a peptidoglycan and between N-acetyl-D-glucosamine residues in chitodextrins.. Lysozymes have primarily a bacteriolytic function; those in tissues and body fluids are associated with the monocyte-macrophage system and enhance the activity of immunoagents. The sequence is that of Lysozyme C (LYZ) from Pygathrix nemaeus (Red-shanked douc langur).